A 628-amino-acid polypeptide reads, in one-letter code: Chaperone protein DnaK (628 aa).

A Phosphothreonine; by autocatalysis modification is found at T174. A disordered region spans residues 589–628 (AAGGAGPDMGAGAGPDMGAGASNGSAPYGDDVVDGDYKEV). The segment covering 591-605 (GGAGPDMGAGAGPDM) has biased composition (gly residues).

Belongs to the heat shock protein 70 family.

Functionally, acts as a chaperone. The polypeptide is Chaperone protein DnaK (Lachnospira eligens (strain ATCC 27750 / DSM 3376 / VPI C15-48 / C15-B4) (Eubacterium eligens)).